The sequence spans 792 residues: X-ray radiation resistance-associated protein 1 (792 aa).

LRR repeat units lie at residues 104-125, 141-155, 164-184, 188-209, 229-250, and 254-275; these read DLCTINAKENDFKHFHSVIYIN, ALKELDLAFNGIKTI, LLEFLDLSFNSLTVEAICDLG, HLRVLLLTGNGLTSLPPNLAVA, ALETLMLDDNRLSNPSCFASLA, and RLKKLSLDENRIIRIPYLQQVQ. 3 disordered regions span residues 490–517, 537–562, and 577–601; these read AEDLPTTKSTSVESEMPTENLEGHSPSC, TLSHLSDTTVRLSPERPSDEDSKSTE, and IHKDDLELKEKDQKKPPTAPREVKG. The segment covering 549-560 has biased composition (basic and acidic residues); sequence SPERPSDEDSKS. Positions 723 to 745 form a coiled coil; it reads HKQYLEAKRLLKEFQARYRQLVS.

In terms of tissue distribution, expressed predominantly in testis followed by prostate and ovary. Low levels found in other tissues including peripheral blood leukocytes, spleen, thymus, small intestine and colon. Also expressed in neuroblastoma, glioma, breast, lung, leukemia, renal, ovarian, prostate and colorectal cancer cell lines.

The protein localises to the cytoplasm. It localises to the nucleus. Its function is as follows. May be involved in the response of cells to X-ray radiation. The chain is X-ray radiation resistance-associated protein 1 from Homo sapiens (Human).